The following is a 403-amino-acid chain: 4-hydroxyphenylpyruvate dioxygenase (403 aa).

VOC domains follow at residues 25–169 (GYDH…LVER) and 201–359 (RIDH…LFTK). Residues histidine 204, histidine 287, and glutamate 370 each coordinate Fe cation.

Belongs to the 4HPPD family. In terms of assembly, homodimer. The cofactor is Fe cation.

The enzyme catalyses 3-(4-hydroxyphenyl)pyruvate + O2 = homogentisate + CO2. It participates in amino-acid degradation; L-phenylalanine degradation; acetoacetate and fumarate from L-phenylalanine: step 3/6. Its function is as follows. 4-hydroxyphenylpyruvate dioxygenase; part of the L-tyrosine degradation gene cluster that mediates the biosynthesis of the brownish pigment pyomelanin as an alternative melanin. The 4-hydroxyphenylpyruvate dioxygenase hppD catalyzes the conversion of 4-hydroxyphenylpyruvate to homogentisic acid (HGA). The protein hmgX is crucial for this conversion and thus, probably functions as an accessory factor to mediate specific activity of hppD. The homogentisate 1,2-dioxygenase hmgA is then involved in the cleavage of the aromatic ring of HGA and its conversion to 4-maleylacetoacetate. When hmgA activity is lowered by the cell wall integrity (CWI) signaling pathway, HGA accumulates and leads to the production of pyomelanin through benzoquinone acetic acid after oxidation and polymerization. On the opposite, in non-stress conditions, both hppD and hmgA activities are balanced and HGA is degraded into 4-maleylacetoacetate. 4-maleylacetoacetate is further converted to 4-fumarylacetoacetate by the maleylacetoacetate isomerase maiA, which is degraded into fumarate and acetoacetate by the fumarylacetoacetase fahA. The polypeptide is 4-hydroxyphenylpyruvate dioxygenase (Aspergillus fumigatus (strain ATCC MYA-4609 / CBS 101355 / FGSC A1100 / Af293) (Neosartorya fumigata)).